Reading from the N-terminus, the 351-residue chain is Phosphoribosylformylglycinamidine cyclo-ligase (351 aa).

Belongs to the AIR synthase family.

Its subcellular location is the cytoplasm. It carries out the reaction 2-formamido-N(1)-(5-O-phospho-beta-D-ribosyl)acetamidine + ATP = 5-amino-1-(5-phospho-beta-D-ribosyl)imidazole + ADP + phosphate + H(+). The protein operates within purine metabolism; IMP biosynthesis via de novo pathway; 5-amino-1-(5-phospho-D-ribosyl)imidazole from N(2)-formyl-N(1)-(5-phospho-D-ribosyl)glycinamide: step 2/2. The polypeptide is Phosphoribosylformylglycinamidine cyclo-ligase (Idiomarina loihiensis (strain ATCC BAA-735 / DSM 15497 / L2-TR)).